The chain runs to 370 residues: Glucan endo-1,3-beta-glucosidase (370 aa).

The N-terminal stretch at 1–32 (MASFFARTRRFSLVSLFLLELFTINLIPTTDA) is a signal peptide. Gln-33 bears the Pyrrolidone carboxylic acid mark. Glu-127 acts as the Proton donor in catalysis. Glu-272 serves as the catalytic Nucleophile. Positions 348 to 370 (GERRDGEIVEGDFNGTVSLKSDM) are cleaved as a propeptide — removed in mature form. The N-linked (GlcNAc...) asparagine glycan is linked to Asn-361.

It belongs to the glycosyl hydrolase 17 family. As to expression, constitutively expressed in seedling roots.

It catalyses the reaction Hydrolysis of (1-&gt;3)-beta-D-glucosidic linkages in (1-&gt;3)-beta-D-glucans.. Implicated in the defense of plants against pathogens. The polypeptide is Glucan endo-1,3-beta-glucosidase (Pisum sativum (Garden pea)).